We begin with the raw amino-acid sequence, 27 residues long: uncharacterized protein (27 aa).

The protein localises to the plastid. Its subcellular location is the chloroplast. This is an uncharacterized protein from Anthoceros angustus (Hornwort).